We begin with the raw amino-acid sequence, 331 residues long: Holliday junction branch migration complex subunit RuvB (331 aa).

The tract at residues 1-178 (MRNSIFEQEE…FGITLRLDFY (178 aa)) is large ATPase domain (RuvB-L). Residues Leu17, Arg18, Gly59, Lys62, Thr63, Thr64, 125-127 (EDY), Arg168, Tyr178, and Arg215 contribute to the ATP site. Thr63 is a binding site for Mg(2+). The tract at residues 179–249 (TVSELLQLLQ…FADLALNKME (71 aa)) is small ATPAse domain (RuvB-S). The interval 252–331 (QFGLDKLDYT…LSTINSARLP (80 aa)) is head domain (RuvB-H). Positions 307 and 312 each coordinate DNA.

This sequence belongs to the RuvB family. In terms of assembly, homohexamer. Forms an RuvA(8)-RuvB(12)-Holliday junction (HJ) complex. HJ DNA is sandwiched between 2 RuvA tetramers; dsDNA enters through RuvA and exits via RuvB. An RuvB hexamer assembles on each DNA strand where it exits the tetramer. Each RuvB hexamer is contacted by two RuvA subunits (via domain III) on 2 adjacent RuvB subunits; this complex drives branch migration. In the full resolvosome a probable DNA-RuvA(4)-RuvB(12)-RuvC(2) complex forms which resolves the HJ.

The protein localises to the cytoplasm. The enzyme catalyses ATP + H2O = ADP + phosphate + H(+). The RuvA-RuvB-RuvC complex processes Holliday junction (HJ) DNA during genetic recombination and DNA repair, while the RuvA-RuvB complex plays an important role in the rescue of blocked DNA replication forks via replication fork reversal (RFR). RuvA specifically binds to HJ cruciform DNA, conferring on it an open structure. The RuvB hexamer acts as an ATP-dependent pump, pulling dsDNA into and through the RuvAB complex. RuvB forms 2 homohexamers on either side of HJ DNA bound by 1 or 2 RuvA tetramers; 4 subunits per hexamer contact DNA at a time. Coordinated motions by a converter formed by DNA-disengaged RuvB subunits stimulates ATP hydrolysis and nucleotide exchange. Immobilization of the converter enables RuvB to convert the ATP-contained energy into a lever motion, pulling 2 nucleotides of DNA out of the RuvA tetramer per ATP hydrolyzed, thus driving DNA branch migration. The RuvB motors rotate together with the DNA substrate, which together with the progressing nucleotide cycle form the mechanistic basis for DNA recombination by continuous HJ branch migration. Branch migration allows RuvC to scan DNA until it finds its consensus sequence, where it cleaves and resolves cruciform DNA. In Neorickettsia sennetsu (strain ATCC VR-367 / Miyayama) (Ehrlichia sennetsu), this protein is Holliday junction branch migration complex subunit RuvB.